The primary structure comprises 344 residues: 3-isopropylmalate dehydrogenase (344 aa).

Substrate-binding residues include arginine 93, arginine 103, arginine 131, and aspartate 215. Residues aspartate 215, aspartate 239, and aspartate 243 each contribute to the Mg(2+) site. 273–285 serves as a coordination point for NAD(+); sequence GSAPDIAGKGIAN.

Belongs to the isocitrate and isopropylmalate dehydrogenases family. LeuB type 1 subfamily. In terms of assembly, homodimer. Mg(2+) is required as a cofactor. Mn(2+) serves as cofactor.

It localises to the cytoplasm. It carries out the reaction (2R,3S)-3-isopropylmalate + NAD(+) = 4-methyl-2-oxopentanoate + CO2 + NADH. The protein operates within amino-acid biosynthesis; L-leucine biosynthesis; L-leucine from 3-methyl-2-oxobutanoate: step 3/4. Catalyzes the oxidation of 3-carboxy-2-hydroxy-4-methylpentanoate (3-isopropylmalate) to 3-carboxy-4-methyl-2-oxopentanoate. The product decarboxylates to 4-methyl-2 oxopentanoate. The sequence is that of 3-isopropylmalate dehydrogenase from Streptococcus mutans serotype c (strain ATCC 700610 / UA159).